An 84-amino-acid chain; its full sequence is Putative glutaredoxin MT3292 (84 aa).

The Glutaredoxin domain maps to 1–84 (MITAALTIYT…VKAKLVKIAG (84 aa)).

In Mycobacterium tuberculosis (strain CDC 1551 / Oshkosh), this protein is Putative glutaredoxin MT3292.